The following is a 61-amino-acid chain: Metallothionein-1L (61 aa).

Positions Met-1–Cys-29 are beta. 20 residues coordinate a divalent metal cation: Cys-5, Cys-7, Cys-13, Cys-15, Cys-19, Cys-21, Cys-24, Cys-26, Cys-29, Cys-33, Cys-34, Cys-36, Cys-37, Cys-41, Cys-44, Cys-48, Cys-50, Cys-57, Cys-59, and Cys-60. The alpha stretch occupies residues Lys-30–Ala-61.

It belongs to the metallothionein superfamily. Type 1 family. Monomer. In terms of tissue distribution, expressed in reticulocytes.

Metallothioneins have a high content of cysteine residues that bind various heavy metals; these proteins are transcriptionally regulated by both heavy metals and glucocorticoids. This is Metallothionein-1L (MT1L) from Homo sapiens (Human).